The following is a 109-amino-acid chain: Large ribosomal subunit protein uL22 (109 aa).

It belongs to the universal ribosomal protein uL22 family. In terms of assembly, part of the 50S ribosomal subunit.

This protein binds specifically to 23S rRNA; its binding is stimulated by other ribosomal proteins, e.g. L4, L17, and L20. It is important during the early stages of 50S assembly. It makes multiple contacts with different domains of the 23S rRNA in the assembled 50S subunit and ribosome. Functionally, the globular domain of the protein is located near the polypeptide exit tunnel on the outside of the subunit, while an extended beta-hairpin is found that lines the wall of the exit tunnel in the center of the 70S ribosome. In Cupriavidus necator (strain ATCC 17699 / DSM 428 / KCTC 22496 / NCIMB 10442 / H16 / Stanier 337) (Ralstonia eutropha), this protein is Large ribosomal subunit protein uL22.